The chain runs to 312 residues: Peroxisome biogenesis factor 2 (312 aa).

Residues 1-22 (MAGAGGDKPFAKAGPSPLSRVL) lie on the Peroxisomal matrix side of the membrane. The chain crosses the membrane as a helical span at residues 23–49 (RISQLDAFELDGALEQLVWSQFTQCFQ). The Cytoplasmic segment spans residues 50–55 (HFKPGI). The helical transmembrane segment at 56 to 81 (LTPVEPELKALLQLLLWRFTIYSNSA) threads the bilayer. At 82-105 (TVGQSLLNIRYKNALIPGQKYRPM) the chain is on the peroxisomal matrix side. The chain crosses the membrane as a helical span at residues 106-132 (SRPQKFWFALLTVGEKWFRERSHSLFL). The Cytoplasmic segment spans residues 133 to 141 (NHPAESNAR). Residues 142–168 (KARKVLSILLGLTKAASLVNFLLFLQR) form a helical membrane-spanning segment. Residues 169 to 195 (GTFPTLTERLLGVQPVFSRPQGPRDIN) lie on the Peroxisomal matrix side of the membrane. A helical transmembrane segment spans residues 196–219 (FQYLNRELLWHGFAEFLIFLLPLI). Residues 220 to 312 (NVWKLKAGVS…LQVGTELLQS (93 aa)) are Cytoplasmic-facing. Positions 252, 255, 267, 269, 272, 275, 288, and 291 each coordinate Zn(2+). Residues 252–292 (CAICGEWPTMPHSIGCKHVFCYYCVKSNVIADIYFTCPKCG) form an RING-type zinc finger.

It belongs to the pex2/pex10/pex12 family. In terms of assembly, component of the PEX2-PEX10-PEX12 retrotranslocation channel.

Its subcellular location is the peroxisome membrane. It catalyses the reaction [E2 ubiquitin-conjugating enzyme]-S-ubiquitinyl-L-cysteine + [acceptor protein]-L-cysteine = [E2 ubiquitin-conjugating enzyme]-L-cysteine + [acceptor protein]-S-ubiquitinyl-L-cysteine.. The enzyme catalyses S-ubiquitinyl-[E2 ubiquitin-conjugating enzyme]-L-cysteine + [acceptor protein]-L-lysine = [E2 ubiquitin-conjugating enzyme]-L-cysteine + N(6)-ubiquitinyl-[acceptor protein]-L-lysine.. It functions in the pathway protein modification; protein ubiquitination. E3 ubiquitin-protein ligase component of a retrotranslocation channel required for peroxisome organization by mediating export of the PEX5 receptor from peroxisomes to the cytosol, thereby promoting PEX5 recycling. The retrotranslocation channel is composed of PEX2, PEX10 and PEX12; each subunit contributing transmembrane segments that coassemble into an open channel that specifically allows the passage of PEX5 through the peroxisomal membrane. PEX2 also regulates peroxisome organization by acting as a E3 ubiquitin-protein ligase. This is Peroxisome biogenesis factor 2 (pex2) from Danio rerio (Zebrafish).